The chain runs to 381 residues: MTATHTHSNGSNDFTPVSINDHVHRRFNPLLGKHVLVSPHRSLRPWNGQKETPAIPVETPHDSKCYLCPGNKRTTGQHNPDYKGIYVFENDFPALLPDPLAVGTNKISDDPLFQSEPVRGRCKVICFHPRHDLTMAAMRISEINHVLDGWKDVYAEEGKIMQEESSDGCVQIFENRGAMMGCSAPHPHGQVWTTSFVPDEPATEIENFVRYASGRSGSHMLLDYALREVKARERVVTLHESGWVAVVPYWAAWPFEILLMPYKRHIPSILQLTAEEQTGLATILKDVLSRYDNLFSCPFPYSMGLHQSPLPPTDPTSNSAQVHFHFYPPLLRSATVRKFMVGFELLGEAQRDIVPEQAAVRLRESLPHKRATLSNDKPYNP.

Cys65 and Cys68 together coordinate Zn(2+). 90–91 is a binding site for UDP-alpha-D-glucose; the sequence is ND. His131 provides a ligand contact to Zn(2+). Residue Asn175 coordinates UDP-alpha-D-glucose. His186 contributes to the Zn(2+) binding site. His188 (tele-UMP-histidine intermediate) is an active-site residue. Gln190 provides a ligand contact to UDP-alpha-D-glucose. Residues Glu204, His306, His323, and His325 each coordinate Fe cation. Residues 338 to 341 and 343 to 344 contribute to the UDP-alpha-D-glucose site; these read KFMV and FE.

It belongs to the galactose-1-phosphate uridylyltransferase type 1 family. As to quaternary structure, homodimer. Zn(2+) is required as a cofactor.

The catalysed reaction is alpha-D-galactose 1-phosphate + UDP-alpha-D-glucose = alpha-D-glucose 1-phosphate + UDP-alpha-D-galactose. The protein operates within carbohydrate metabolism; galactose metabolism. The polypeptide is Galactose-1-phosphate uridylyltransferase (GAL7) (Cryptococcus neoformans var. neoformans serotype D (strain B-3501A) (Filobasidiella neoformans)).